The following is a 134-amino-acid chain: Kinetochore-binding protein 3 (134 aa).

It localises to the nucleus. It is found in the chromosome. The protein localises to the centromere. The protein resides in the kinetochore. This is Kinetochore-binding protein 3 (kbp-3) from Caenorhabditis elegans.